The primary structure comprises 132 residues: NAD(P) transhydrogenase subunit alpha part 2 (132 aa).

The next 3 helical transmembrane spans lie at Pro-43 to Trp-63, Pro-72 to Ile-92, and Leu-103 to Thr-123.

As to quaternary structure, complex of an alpha and a beta chain; in Rickettsia, the alpha chain seems to be made of two subunits.

It is found in the cell inner membrane. It catalyses the reaction NAD(+) + NADPH + H(+)(in) = NADH + NADP(+) + H(+)(out). In terms of biological role, the transhydrogenation between NADH and NADP is coupled to respiration and ATP hydrolysis and functions as a proton pump across the membrane. This is NAD(P) transhydrogenase subunit alpha part 2 (pntAB) from Rickettsia prowazekii (strain Madrid E).